The sequence spans 203 residues: Dual-action ribosomal maturation protein DarP (203 aa).

2 disordered regions span residues M1–Q31 and G183–A203. The segment covering D186–A203 has biased composition (acidic residues).

It belongs to the DarP family.

It is found in the cytoplasm. Functionally, member of a network of 50S ribosomal subunit biogenesis factors which assembles along the 30S-50S interface, preventing incorrect 23S rRNA structures from forming. Promotes peptidyl transferase center (PTC) maturation. The sequence is that of Dual-action ribosomal maturation protein DarP from Burkholderia cenocepacia (strain ATCC BAA-245 / DSM 16553 / LMG 16656 / NCTC 13227 / J2315 / CF5610) (Burkholderia cepacia (strain J2315)).